We begin with the raw amino-acid sequence, 275 residues long: NAC domain-containing protein 2 (275 aa).

One can recognise an NAC domain in the interval 10–162; the sequence is LPPGFRFHPT…DWVLCRIYKK (153 aa). A DNA-binding region spans residues 107–168; it reads VGIKKALVFY…IYKKKNLERA (62 aa).

Expressed in roots, stem, flowers, and leaves.

The protein localises to the nucleus. Functionally, transcription factor that binds DNA motifs 5'-CGT[AG](5N)NACG[ACT][AC][AT][ACG][ACT]-3' and 5'-CACG[ACT][AC][AT][AGT][CT]-3' in target genes promoters. Promotes leaf senescence (developmental, light-induced and ABA-induced senescence) and regulates fruit yield and sugar content, probably by establishing abscisic acid (ABA) homeostasis. Activates the expression of senescence and ABA associated genes including NCED1, ABCG40, CYP707A2, SAG113, SGR1 and PAO, by directly binding to their promoters. This is NAC domain-containing protein 2 from Solanum lycopersicum (Tomato).